The chain runs to 362 residues: 3-isopropylmalate dehydrogenase (362 aa).

Residue 78–91 (GYKWDSLPPHQRPE) coordinates NAD(+). Substrate is bound by residues Arg98, Arg108, Arg136, and Asp226. Mg(2+)-binding residues include Asp226, Asp250, and Asp254. NAD(+) is bound at residue 284–296 (GSAPDIAGLDKAN).

The protein belongs to the isocitrate and isopropylmalate dehydrogenases family. LeuB type 1 subfamily. As to quaternary structure, homodimer. The cofactor is Mg(2+). It depends on Mn(2+) as a cofactor.

The protein resides in the cytoplasm. It catalyses the reaction (2R,3S)-3-isopropylmalate + NAD(+) = 4-methyl-2-oxopentanoate + CO2 + NADH. The protein operates within amino-acid biosynthesis; L-leucine biosynthesis; L-leucine from 3-methyl-2-oxobutanoate: step 3/4. In terms of biological role, catalyzes the oxidation of 3-carboxy-2-hydroxy-4-methylpentanoate (3-isopropylmalate) to 3-carboxy-4-methyl-2-oxopentanoate. The product decarboxylates to 4-methyl-2 oxopentanoate. This chain is 3-isopropylmalate dehydrogenase, found in Trichormus variabilis (strain ATCC 29413 / PCC 7937) (Anabaena variabilis).